The chain runs to 469 residues: RNA-editing ligase 1, mitochondrial (469 aa).

The N-terminal 44 residues, 1-44, are a transit peptide targeting the mitochondrion; the sequence is MQLQRLGAPLLKRLVGGCIRQSTAPIMPCVVVSGSGVFLTPVRT. ATP-binding positions include 59-61, 86-92, Arg111, Glu159, Phe209, and 307-309; these read IEI, EKVHGTN, and KLR. The active-site N6-AMP-lysine intermediate is the Lys87. The segment at 450–469 is disordered; that stretch reads AAAQSEAIPPLSPAAPTKGE.

It belongs to the RNA ligase 2 family. As to quaternary structure, component of the RNA editing complex (editosome), a 1600 kDa complex composed of at least 20 proteins. Interacts with terminal uridylyltransferase MEAT1.

The protein resides in the mitochondrion. The catalysed reaction is ATP + (ribonucleotide)n-3'-hydroxyl + 5'-phospho-(ribonucleotide)m = (ribonucleotide)n+m + AMP + diphosphate.. Essential for RNA editing. RNA editing in kinetoplastid mitochondria inserts and deletes uridylates at multiple sites in pre-mRNAs as directed by guide RNAs. In Trypanosoma brucei brucei, this protein is RNA-editing ligase 1, mitochondrial (REL1).